Consider the following 330-residue polypeptide: Nuclear apoptosis-inducing factor 1 (330 aa).

The segment at 1-74 (MASPPAPPAK…CHRELPEVKK (74 aa)) is required for nuclear localization and apoptosis-inducing activity. 3 disordered regions span residues 92-117 (AAME…TGAT), 147-175 (CGAG…AAPS), and 309-330 (NTPS…GIIQ). The segment covering 95–108 (EGGGESQNGGGAGT) has biased composition (gly residues).

This sequence belongs to the NAIF1 family.

The protein resides in the nucleus. Its function is as follows. Induces apoptosis. This chain is Nuclear apoptosis-inducing factor 1 (NAIF1), found in Gallus gallus (Chicken).